The primary structure comprises 285 residues: Polyamine aminopropyltransferase (285 aa).

The PABS domain maps to 5–241 (DNWYIEHFQP…GWWSVTMASK (237 aa)). S-methyl-5'-thioadenosine is bound at residue Gln35. Positions 66 and 90 each coordinate spermidine. S-methyl-5'-thioadenosine is bound by residues Asp110 and 141–142 (DG). The Proton acceptor role is filled by Asp160. 160–163 (DSTD) serves as a coordination point for spermidine. Pro167 is a binding site for S-methyl-5'-thioadenosine.

This sequence belongs to the spermidine/spermine synthase family. Homodimer or homotetramer.

It is found in the cytoplasm. The catalysed reaction is S-adenosyl 3-(methylsulfanyl)propylamine + putrescine = S-methyl-5'-thioadenosine + spermidine + H(+). It functions in the pathway amine and polyamine biosynthesis; spermidine biosynthesis; spermidine from putrescine: step 1/1. Its function is as follows. Catalyzes the irreversible transfer of a propylamine group from the amino donor S-adenosylmethioninamine (decarboxy-AdoMet) to putrescine (1,4-diaminobutane) to yield spermidine. This is Polyamine aminopropyltransferase from Xanthomonas oryzae pv. oryzae (strain MAFF 311018).